Here is a 541-residue protein sequence, read N- to C-terminus: uncharacterized protein (541 aa).

12 helical membrane-spanning segments follow: residues 99 to 119 (WIVVVQISLIAFVVTFGSSVY), 131 to 153 (GVSISVSSLGSCVFLVGFGFGSL), 165 to 185 (FVVYFCTLLMFTLFQIGGGCA), 187 to 207 (NIWTLVILRFFQGFFGSTPLS), 224 to 244 (YVLPGFCTFPFLGPIFGPIIG), 256 to 276 (WVFWINMIMGAVVIVIIFFFM), 325 to 345 (LLITEPIVVCFTLYLTVVYII), 367 to 387 (IGLSFIGIGIGIVLAGACTPI), 409 to 429 (LYPLFFGSIMLPISMFWFAWT), 439 to 459 (WIVPLISSIFFGWSLLFVFFV), 472 to 494 (AASALAAATLVRYAASGGMSLVG), and 508 to 528 (SLLGFISVGMIPIPFLFFIYG).

This sequence belongs to the major facilitator superfamily. CAR1 family.

The protein localises to the membrane. This is an uncharacterized protein from Schizosaccharomyces pombe (strain 972 / ATCC 24843) (Fission yeast).